We begin with the raw amino-acid sequence, 290 residues long: Triplex capsid protein 1 (290 aa).

It belongs to the herpesviridae TRX1 protein family. As to quaternary structure, interacts with TRX2, MCP and capsid vertex component 2/CVC2.

Its subcellular location is the virion. The protein localises to the host nucleus. Functionally, structural component of the T=16 icosahedral capsid. The capsid is composed of pentamers and hexamers of major capsid protein/MCP, which are linked together by heterotrimers called triplexes. These triplexes are formed by a single molecule of triplex protein 1/TRX1 and two copies of triplex protein 2/TRX2. Additionally, TRX1 is required for efficient transport of TRX2 to the nucleus, which is the site of capsid assembly. The protein is Triplex capsid protein 1 of Human cytomegalovirus (strain AD169) (HHV-5).